Consider the following 557-residue polypeptide: Dihydroxy-acid dehydratase (557 aa).

Asp-78 serves as a coordination point for Mg(2+). Residue Cys-119 participates in [2Fe-2S] cluster binding. The Mg(2+) site is built by Asp-120 and Lys-121. At Lys-121 the chain carries N6-carboxylysine. Cys-192 contributes to the [2Fe-2S] cluster binding site. Glu-442 contributes to the Mg(2+) binding site. Residue Ser-468 is the Proton acceptor of the active site.

It belongs to the IlvD/Edd family. Homodimer. It depends on [2Fe-2S] cluster as a cofactor. Mg(2+) is required as a cofactor.

It catalyses the reaction (2R)-2,3-dihydroxy-3-methylbutanoate = 3-methyl-2-oxobutanoate + H2O. The enzyme catalyses (2R,3R)-2,3-dihydroxy-3-methylpentanoate = (S)-3-methyl-2-oxopentanoate + H2O. It participates in amino-acid biosynthesis; L-isoleucine biosynthesis; L-isoleucine from 2-oxobutanoate: step 3/4. The protein operates within amino-acid biosynthesis; L-valine biosynthesis; L-valine from pyruvate: step 3/4. Functionally, functions in the biosynthesis of branched-chain amino acids. Catalyzes the dehydration of (2R,3R)-2,3-dihydroxy-3-methylpentanoate (2,3-dihydroxy-3-methylvalerate) into 2-oxo-3-methylpentanoate (2-oxo-3-methylvalerate) and of (2R)-2,3-dihydroxy-3-methylbutanoate (2,3-dihydroxyisovalerate) into 2-oxo-3-methylbutanoate (2-oxoisovalerate), the penultimate precursor to L-isoleucine and L-valine, respectively. This Bacillus cereus (strain ATCC 10987 / NRS 248) protein is Dihydroxy-acid dehydratase.